The sequence spans 420 residues: Glucose-1-phosphate adenylyltransferase (420 aa).

Alpha-D-glucose 1-phosphate-binding positions include Tyr107, Gly173, 188-189 (EK), and Ser206.

The protein belongs to the bacterial/plant glucose-1-phosphate adenylyltransferase family. In terms of assembly, homotetramer.

The enzyme catalyses alpha-D-glucose 1-phosphate + ATP + H(+) = ADP-alpha-D-glucose + diphosphate. It functions in the pathway glycan biosynthesis; glycogen biosynthesis. Its function is as follows. Involved in the biosynthesis of ADP-glucose, a building block required for the elongation reactions to produce glycogen. Catalyzes the reaction between ATP and alpha-D-glucose 1-phosphate (G1P) to produce pyrophosphate and ADP-Glc. The chain is Glucose-1-phosphate adenylyltransferase from Shewanella sp. (strain MR-4).